The sequence spans 332 residues: Long form salivary protein D7L1 (332 aa).

A signal peptide spans 1–21; it reads MHSPKSFLLLAVVFVALRVTA. Cystine bridges form between cysteine 40-cysteine 77 and cysteine 73-cysteine 133. Leukotriene E4 is bound at residue tryptophan 61. Position 176 (lysine 176) interacts with leukotriene E4. Disulfide bonds link cysteine 184/cysteine 219, cysteine 200/cysteine 331, and cysteine 259/cysteine 278. 2 residues coordinate noradrenaline: glutamate 185 and arginine 203. Residues aspartate 294 and glutamate 297 each contribute to the noradrenaline site.

This sequence belongs to the PBP/GOBP family. Female mosquito salivary gland (at protein level).

It is found in the secreted. Modulates blood feeding of female mosquitoes on vertebrate species by binding and sequestering different mediators involved in the host response, such as biogenic amines and eicosanoids. Binds dopamine, serotonin, histamine, tryptamine, adrenaline, noradrenaline, leukotriene B4, leukotriene C4, leukotriene D4, leukotriene E4 and U-46619, a stable analog of thromboxane A2. Inhibits platelet aggregation induced by serotonin and low doses of thromboxane A2 analog U-46619 but not by high doses of U-46619, collagen or ADP. Prevents leukocyte recruitment. The sequence is that of Long form salivary protein D7L1 from Aedes albopictus (Asian tiger mosquito).